The sequence spans 250 residues: PF03932 family protein CutC (250 aa).

The protein belongs to the CutC family.

It is found in the cytoplasm. The polypeptide is PF03932 family protein CutC (Vibrio vulnificus (strain CMCP6)).